A 231-amino-acid polypeptide reads, in one-letter code: Biosynthetic peptidoglycan transglycosylase (231 aa).

A helical transmembrane segment spans residues 12–32 (LLAAFALLLLWQVWLFAQVAW).

This sequence belongs to the glycosyltransferase 51 family.

The protein resides in the cell inner membrane. It catalyses the reaction [GlcNAc-(1-&gt;4)-Mur2Ac(oyl-L-Ala-gamma-D-Glu-L-Lys-D-Ala-D-Ala)](n)-di-trans,octa-cis-undecaprenyl diphosphate + beta-D-GlcNAc-(1-&gt;4)-Mur2Ac(oyl-L-Ala-gamma-D-Glu-L-Lys-D-Ala-D-Ala)-di-trans,octa-cis-undecaprenyl diphosphate = [GlcNAc-(1-&gt;4)-Mur2Ac(oyl-L-Ala-gamma-D-Glu-L-Lys-D-Ala-D-Ala)](n+1)-di-trans,octa-cis-undecaprenyl diphosphate + di-trans,octa-cis-undecaprenyl diphosphate + H(+). It participates in cell wall biogenesis; peptidoglycan biosynthesis. In terms of biological role, peptidoglycan polymerase that catalyzes glycan chain elongation from lipid-linked precursors. This chain is Biosynthetic peptidoglycan transglycosylase, found in Azoarcus sp. (strain BH72).